Reading from the N-terminus, the 657-residue chain is Translation factor GUF1, mitochondrial (657 aa).

Residues 1–21 (MLKTLGLRSLCPSLGGRGFRR) constitute a mitochondrion transit peptide. Residues 56-240 (ENYRNFSIVA…TIVDRIPPPT (185 aa)) form the tr-type G domain. GTP contacts are provided by residues 65 to 72 (AHVDHGKS), 132 to 136 (DTPGH), and 186 to 189 (NKID).

This sequence belongs to the TRAFAC class translation factor GTPase superfamily. Classic translation factor GTPase family. LepA subfamily.

It localises to the mitochondrion inner membrane. It catalyses the reaction GTP + H2O = GDP + phosphate + H(+). Its function is as follows. Promotes mitochondrial protein synthesis. May act as a fidelity factor of the translation reaction, by catalyzing a one-codon backward translocation of tRNAs on improperly translocated ribosomes. Binds to mitochondrial ribosomes in a GTP-dependent manner. The polypeptide is Translation factor GUF1, mitochondrial (Candida glabrata (strain ATCC 2001 / BCRC 20586 / JCM 3761 / NBRC 0622 / NRRL Y-65 / CBS 138) (Yeast)).